Consider the following 216-residue polypeptide: Probable transaldolase (216 aa).

The active-site Schiff-base intermediate with substrate is Lys83.

The protein belongs to the transaldolase family. Type 3B subfamily.

The protein resides in the cytoplasm. The enzyme catalyses D-sedoheptulose 7-phosphate + D-glyceraldehyde 3-phosphate = D-erythrose 4-phosphate + beta-D-fructose 6-phosphate. It participates in carbohydrate degradation; pentose phosphate pathway; D-glyceraldehyde 3-phosphate and beta-D-fructose 6-phosphate from D-ribose 5-phosphate and D-xylulose 5-phosphate (non-oxidative stage): step 2/3. In terms of biological role, transaldolase is important for the balance of metabolites in the pentose-phosphate pathway. The sequence is that of Probable transaldolase from Sphingopyxis alaskensis (strain DSM 13593 / LMG 18877 / RB2256) (Sphingomonas alaskensis).